The primary structure comprises 193 residues: Superoxide dismutase [Fe] (193 aa).

Fe cation is bound by residues histidine 27, histidine 74, aspartate 157, and histidine 161.

This sequence belongs to the iron/manganese superoxide dismutase family. In terms of assembly, monomer. Fe cation serves as cofactor.

It catalyses the reaction 2 superoxide + 2 H(+) = H2O2 + O2. In terms of biological role, destroys superoxide anion radicals which are normally produced within the cells and which are toxic to biological systems. Involved in the metabolism of 4-aminophenol. May have an indirect role in hydroxyquinol metabolism by scavenging and detoxifying reactive species that promote its auto-oxidation. The chain is Superoxide dismutase [Fe] from Burkholderia sp.